A 503-amino-acid polypeptide reads, in one-letter code: ATP synthase subunit alpha (503 aa).

170 to 177 (GDKQTGKT) contacts ATP.

This sequence belongs to the ATPase alpha/beta chains family. As to quaternary structure, F-type ATPases have 2 components, CF(1) - the catalytic core - and CF(0) - the membrane proton channel. CF(1) has five subunits: alpha(3), beta(3), gamma(1), delta(1), epsilon(1). CF(0) has three main subunits: a(1), b(2) and c(9-12). The alpha and beta chains form an alternating ring which encloses part of the gamma chain. CF(1) is attached to CF(0) by a central stalk formed by the gamma and epsilon chains, while a peripheral stalk is formed by the delta and b chains.

The protein localises to the cell inner membrane. The catalysed reaction is ATP + H2O + 4 H(+)(in) = ADP + phosphate + 5 H(+)(out). In terms of biological role, produces ATP from ADP in the presence of a proton gradient across the membrane. The alpha chain is a regulatory subunit. The sequence is that of ATP synthase subunit alpha from Helicobacter pylori (strain HPAG1).